The following is a 224-amino-acid chain: Non-structural protein V (224 aa).

Positions 54 to 65 (QKNIQHPTASHQ) are enriched in polar residues. 2 disordered regions span residues 54-94 (QKNI…TQIP) and 150-172 (TEFK…GHRR). Zn(2+) contacts are provided by His170, Cys189, Cys193, Cys205, Cys207, Cys210, Cys214, and Cys217.

The protein belongs to the paramyxoviruses V protein family. As to quaternary structure, interacts with host IFIH1/MDA5 and DHX58/LGP2. Forms with host DDB1, CUL4A, STAT1, STAT2 and STAT3 the mumps virus V-dependent complex (VDC).

It localises to the virion. It is found in the host cytoplasm. Its function is as follows. Plays an essential role in the inhibition of host immune response. Prevents the establishment of cellular antiviral state by blocking interferon-alpha/beta (IFN-alpha/beta) production and signaling pathway. Interacts with host IFIH1/MDA5 and DHX58/LGP2 to inhibit the transduction pathway involved in the activation of IFN-beta promoter, thus protecting the virus against cell antiviral state. Blocks the type I and II interferon signaling pathways by interacting with host STAT1, STAT2 and STAT3, and mediating their ubiquitination and subsequent proteasomal degradation. This is Non-structural protein V from Homo sapiens (Human).